A 1025-amino-acid chain; its full sequence is AP-2 complex subunit alpha (1025 aa).

The disordered stretch occupies residues 713-737 (RSIMVPMPPPSRRNTIDDVNSKISS). Thr-727 carries the phosphothreonine modification. Position 733 is a phosphoserine (Ser-733).

The protein belongs to the adaptor complexes large subunit family. In terms of assembly, adaptor protein complex 2 (AP-2) is a heterotetramer composed of two large adaptins (alpha-type subunit APL3 and beta-type subunit APL1), a medium chain (mu-type subunit APM4) and a small adaptin (sigma-type subunit APS2).

It is found in the cell membrane. The protein localises to the membrane. It localises to the coated pit. Its function is as follows. Adaptins are components of the adaptor complexes which link clathrin to receptors in coated vesicles. Clathrin-associated protein complexes are believed to interact with the cytoplasmic tails of membrane proteins, leading to their selection and concentration. Alpha adaptin is a subunit of the plasma membrane adaptor. Facilitates interaction between APL1 and APS2. This Saccharomyces cerevisiae (strain ATCC 204508 / S288c) (Baker's yeast) protein is AP-2 complex subunit alpha (APL3).